A 327-amino-acid chain; its full sequence is Glutamyl endopeptidase (327 aa).

The N-terminal stretch at 1–29 is a signal peptide; the sequence is MKGKFLKVSSLFVATLTTATLVSSPAANA. The propeptide occupies 30 to 68; sequence LSSKAMDNHPQQSQSSKQQTPKIQKGGNLKPLEQREHAN. The segment at 33-61 is disordered; that stretch reads KAMDNHPQQSQSSKQQTPKIQKGGNLKPL. The segment covering 40 to 54 has biased composition (low complexity); the sequence is QQSQSSKQQTPKIQK. Catalysis depends on charge relay system residues His-119, Asp-161, and Ser-237. The interval 283–327 is disordered; the sequence is FANDDQPNNPDNPDNPNNPDNPNNPNNPDNPDNGDNNNSDNPDAA. A compositionally biased stretch (low complexity) spans 286–327; sequence DDQPNNPDNPDNPNNPDNPNNPNNPDNPDNGDNNNSDNPDAA. 9 consecutive repeat copies span residues 289 to 291, 292 to 294, 295 to 297, 298 to 300, 301 to 303, 304 to 306, 307 to 309, 310 to 312, and 313 to 315. The interval 289–315 is 9 X 3 AA repeats of P-[DN]-N; sequence PNNPDNPDNPNNPDNPNNPNNPDNPDN.

The protein belongs to the peptidase S1B family. Proteolytically cleaved by aureolysin (aur). This cleavage leads to the activation of SspA.

The protein localises to the secreted. It carries out the reaction Preferential cleavage: Glu-|-Xaa, Asp-|-Xaa.. Preferentially cleaves peptide bonds on the carboxyl-terminal side of aspartate and glutamate. Along with other extracellular proteases it is involved in colonization and infection of human tissues. Required for proteolytic maturation of thiol protease SspB and inactivation of SspC, an inhibitor of SspB. It is the most important protease for degradation of fibronectin-binding protein (FnBP) and surface protein A, which are involved in adherence to host cells. May also protect bacteria against host defense mechanism by cleaving the immunoglobulin classes IgG, IgA and IgM. May be involved in the stability of secreted lipases. This Staphylococcus aureus (strain MW2) protein is Glutamyl endopeptidase (sspA).